Reading from the N-terminus, the 66-residue chain is Beta-mammal toxin Cv5 (66 aa).

Residues 1–66 (KEGYIVNYYD…VWPLPKKKCN (66 aa)) form the LCN-type CS-alpha/beta domain. Intrachain disulfides connect cysteine 12–cysteine 65, cysteine 16–cysteine 41, cysteine 25–cysteine 46, and cysteine 29–cysteine 48.

Expressed by the venom gland.

Its subcellular location is the secreted. Is susceptible to be neutralized by human antibodies scFvs 10FG2 and HV. Its function is as follows. Beta toxins bind voltage-independently at site-4 of sodium channels (Nav) and reduces peak current and shifts the voltage of activation toward more negative potentials thereby affecting sodium channel activation and promoting spontaneous and repetitive firing. This toxin is moderately toxic to mice. The polypeptide is Beta-mammal toxin Cv5 (Centruroides villegasi (Scorpion)).